We begin with the raw amino-acid sequence, 62 residues long: Large ribosomal subunit protein uL30 (62 aa).

It belongs to the universal ribosomal protein uL30 family. Part of the 50S ribosomal subunit.

This Heliobacterium modesticaldum (strain ATCC 51547 / Ice1) protein is Large ribosomal subunit protein uL30.